The chain runs to 494 residues: Ketol-acid reductoisomerase (NADP(+)) (494 aa).

The KARI N-terminal Rossmann domain maps to 14–208 (LDQLGRCRFM…GGHRAGCLES (195 aa)). NADP(+) contacts are provided by residues 45-48 (CGAQ), arginine 68, arginine 76, serine 78, and 108-110 (DKQ). Histidine 132 is an active-site residue. Glycine 158 is a binding site for NADP(+). 2 KARI C-terminal knotted domains span residues 209 to 344 (SFVA…NYPA) and 345 to 487 (SDVE…MSDM). Residues aspartate 217, glutamate 221, glutamate 389, and glutamate 393 each contribute to the Mg(2+) site. Serine 414 contributes to the substrate binding site.

This sequence belongs to the ketol-acid reductoisomerase family. It depends on Mg(2+) as a cofactor.

It catalyses the reaction (2R)-2,3-dihydroxy-3-methylbutanoate + NADP(+) = (2S)-2-acetolactate + NADPH + H(+). The catalysed reaction is (2R,3R)-2,3-dihydroxy-3-methylpentanoate + NADP(+) = (S)-2-ethyl-2-hydroxy-3-oxobutanoate + NADPH + H(+). It functions in the pathway amino-acid biosynthesis; L-isoleucine biosynthesis; L-isoleucine from 2-oxobutanoate: step 2/4. The protein operates within amino-acid biosynthesis; L-valine biosynthesis; L-valine from pyruvate: step 2/4. Functionally, involved in the biosynthesis of branched-chain amino acids (BCAA). Catalyzes an alkyl-migration followed by a ketol-acid reduction of (S)-2-acetolactate (S2AL) to yield (R)-2,3-dihydroxy-isovalerate. In the isomerase reaction, S2AL is rearranged via a Mg-dependent methyl migration to produce 3-hydroxy-3-methyl-2-ketobutyrate (HMKB). In the reductase reaction, this 2-ketoacid undergoes a metal-dependent reduction by NADPH to yield (R)-2,3-dihydroxy-isovalerate. The protein is Ketol-acid reductoisomerase (NADP(+)) of Vibrio atlanticus (strain LGP32) (Vibrio splendidus (strain Mel32)).